A 358-amino-acid chain; its full sequence is Chorismate synthase (358 aa).

Residue R47 participates in NADP(+) binding. FMN contacts are provided by residues 124-126 (RSS), 240-241 (NA), G284, 299-303 (KPIAT), and R325.

The protein belongs to the chorismate synthase family. Homotetramer. Requires FMNH2 as cofactor.

It catalyses the reaction 5-O-(1-carboxyvinyl)-3-phosphoshikimate = chorismate + phosphate. The protein operates within metabolic intermediate biosynthesis; chorismate biosynthesis; chorismate from D-erythrose 4-phosphate and phosphoenolpyruvate: step 7/7. In terms of biological role, catalyzes the anti-1,4-elimination of the C-3 phosphate and the C-6 proR hydrogen from 5-enolpyruvylshikimate-3-phosphate (EPSP) to yield chorismate, which is the branch point compound that serves as the starting substrate for the three terminal pathways of aromatic amino acid biosynthesis. This reaction introduces a second double bond into the aromatic ring system. The chain is Chorismate synthase from Bacteroides thetaiotaomicron (strain ATCC 29148 / DSM 2079 / JCM 5827 / CCUG 10774 / NCTC 10582 / VPI-5482 / E50).